Consider the following 109-residue polypeptide: Nucleoid-associated protein plu3840 (109 aa).

Disordered regions lie at residues 1-23 and 89-109; these read MFGK…KMQK and KEKM…KMPF.

The protein belongs to the YbaB/EbfC family. Homodimer.

It localises to the cytoplasm. Its subcellular location is the nucleoid. Binds to DNA and alters its conformation. May be involved in regulation of gene expression, nucleoid organization and DNA protection. This is Nucleoid-associated protein plu3840 from Photorhabdus laumondii subsp. laumondii (strain DSM 15139 / CIP 105565 / TT01) (Photorhabdus luminescens subsp. laumondii).